Reading from the N-terminus, the 480-residue chain is UDP-glycosyltransferase 71C5 (480 aa).

UDP-alpha-D-glucose-binding positions include serine 290, 349–351 (APQ), 366–374 (HCGWNSVQE), and 388–391 (YAEQ).

It belongs to the UDP-glycosyltransferase family.

Functionally, possesses low quercetin 3-O-glucosyltransferase activity in vitro. The chain is UDP-glycosyltransferase 71C5 (UGT71C5) from Arabidopsis thaliana (Mouse-ear cress).